Reading from the N-terminus, the 362-residue chain is Probable prephenate dehydrogenase NovF (362 aa).

The Prephenate/arogenate dehydrogenase domain maps to 2–283 (RTAVIIGTGM…GIDGSNRVPG (282 aa)).

It belongs to the prephenate/arogenate dehydrogenase family.

The enzyme catalyses prephenate + NAD(+) = 3-(4-hydroxyphenyl)pyruvate + CO2 + NADH. Its pathway is antibiotic biosynthesis; novobiocin biosynthesis. Functionally, probable prephenate dehydrogenase that produces 4-hydroxyphenylpyruvate (4HPP) in the novobiocin biosynthesis pathway. Novobiocin is an aminocoumarin family antibiotic that targets bacterial DNA gyrases. The chain is Probable prephenate dehydrogenase NovF (novF) from Streptomyces niveus (Streptomyces spheroides).